A 202-amino-acid chain; its full sequence is Twist-related protein 1 (202 aa).

Low complexity predominate over residues 1-18 (MMQDVSSSPVSPADDSLS). Residues 1–105 (MMQDVSSSPV…GGGSPQSYEE (105 aa)) form a disordered region. Residues 34 to 43 (RGGRKRRSSR) show a composition bias toward basic residues. Gly residues-rich tracts occupy residues 46–65 (AGGG…GGDE) and 80–99 (GCGG…GGGS). Positions 108 to 159 (TQRVMANVRERQRTQSLNEAFAALRKIIPTLPSDKLSKIQTLKLAARYIDFL) constitute a bHLH domain. The interval 161-191 (QVLQSDELDSKMASCSYVAHERLSYAFSVWR) is sufficient for transactivation activity.

As to quaternary structure, efficient DNA binding requires dimerization with another bHLH protein. Homodimer or heterodimer with E proteins such as TCF3. ID1 binds preferentially to TCF3 but does not interact efficiently with TWIST1 so ID1 levels control the amount of TCF3 available to dimerize with TWIST1 and thus determine the type of dimer formed. As to expression, subset of mesodermal cells.

It localises to the nucleus. Functionally, acts as a transcriptional regulator. Inhibits myogenesis by sequestrating E proteins, inhibiting trans-activation by MEF2, and inhibiting DNA-binding by MYOD1 through physical interaction. This interaction probably involves the basic domains of both proteins. Also represses expression of pro-inflammatory cytokines such as TNFA and IL1B. Regulates cranial suture patterning and fusion. Activates transcription as a heterodimer with E proteins. Regulates gene expression differentially, depending on dimer composition. Homodimers induce expression of FGFR2 and POSTN while heterodimers repress FGFR2 and POSTN expression and induce THBS1 expression. Heterodimerization is also required for osteoblast differentiation. Represses the activity of the circadian transcriptional activator: NPAS2-BMAL1 heterodimer. The sequence is that of Twist-related protein 1 (TWIST1) from Homo sapiens (Human).